A 140-amino-acid chain; its full sequence is N14 matrix protein (140 aa).

The N-terminal stretch at 1 to 25 (MACTLRLTIAALVLLGICHLSRPVA) is a signal peptide.

It belongs to the N16 matrix protein family. Heterooligomer; disulfide-linked. Pif97, Pif80, N16 and other proteins form a complex. As to expression, component of conchiolin, the organic matrix of nacre. Only expressed in the dorsal region of the mantle.

Its subcellular location is the secreted. It is found in the extracellular space. It localises to the extracellular matrix. In terms of biological role, may be specifically involved in the formation of the nacreous layer. In Pinctada maxima (Silver-lipped pearl oyster), this protein is N14 matrix protein.